The following is a 500-amino-acid chain: L-arabinose isomerase (500 aa).

Mn(2+) is bound by residues glutamate 306, glutamate 333, histidine 350, and histidine 450.

The protein belongs to the arabinose isomerase family. Homohexamer. It depends on Mn(2+) as a cofactor.

The enzyme catalyses beta-L-arabinopyranose = L-ribulose. Its pathway is carbohydrate degradation; L-arabinose degradation via L-ribulose; D-xylulose 5-phosphate from L-arabinose (bacterial route): step 1/3. Its function is as follows. Catalyzes the conversion of L-arabinose to L-ribulose. The polypeptide is L-arabinose isomerase (Salmonella arizonae (strain ATCC BAA-731 / CDC346-86 / RSK2980)).